We begin with the raw amino-acid sequence, 327 residues long: Methionyl-tRNA formyltransferase (327 aa).

(6S)-5,6,7,8-tetrahydrofolate is bound at residue 113 to 116 (SILP).

It belongs to the Fmt family.

It catalyses the reaction L-methionyl-tRNA(fMet) + (6R)-10-formyltetrahydrofolate = N-formyl-L-methionyl-tRNA(fMet) + (6S)-5,6,7,8-tetrahydrofolate + H(+). In terms of biological role, attaches a formyl group to the free amino group of methionyl-tRNA(fMet). The formyl group appears to play a dual role in the initiator identity of N-formylmethionyl-tRNA by promoting its recognition by IF2 and preventing the misappropriation of this tRNA by the elongation apparatus. The sequence is that of Methionyl-tRNA formyltransferase from Colwellia psychrerythraea (strain 34H / ATCC BAA-681) (Vibrio psychroerythus).